The chain runs to 201 residues: Putative manganese efflux pump MntP (201 aa).

The next 5 helical transmembrane spans lie at 6 to 26, 39 to 59, 105 to 125, 127 to 147, and 169 to 189; these read CLAV…ATGI, LAFH…TLGL, LTLI…GLSL, VLGI…LLFT, and LAGG…HGVF.

Belongs to the MntP (TC 9.B.29) family.

The protein localises to the cell inner membrane. Probably functions as a manganese efflux pump. This is Putative manganese efflux pump MntP from Nitratidesulfovibrio vulgaris (strain ATCC 29579 / DSM 644 / CCUG 34227 / NCIMB 8303 / VKM B-1760 / Hildenborough) (Desulfovibrio vulgaris).